A 217-amino-acid polypeptide reads, in one-letter code: Small ribosomal subunit protein uS3 (217 aa).

The KH type-2 domain occupies 38–106 (IRKYIDNALQ…KVHINVIEIK (69 aa)).

It belongs to the universal ribosomal protein uS3 family. Part of the 30S ribosomal subunit. Forms a tight complex with proteins S10 and S14.

Binds the lower part of the 30S subunit head. Binds mRNA in the 70S ribosome, positioning it for translation. The polypeptide is Small ribosomal subunit protein uS3 (Staphylococcus saprophyticus subsp. saprophyticus (strain ATCC 15305 / DSM 20229 / NCIMB 8711 / NCTC 7292 / S-41)).